The chain runs to 758 residues: Glucan endo-1,3-beta-D-glucosidase (758 aa).

A signal peptide (tat-type signal) is located at residues 1–34 (MSHASRRRWRRATTSAATAALLCGALLTFPSAPA). The segment at 38–251 (VRLGSGSYTT…SGYASVALLP (214 aa)) is beta-sandwich subdomain. In terms of domain architecture, GH81 spans 38-704 (VRLGSGSYTT…QWLSTLAEFG (667 aa)). The alpha/beta subdomain stretch occupies residues 252–342 (SPDDFDRYAP…EGDRFTTELT (91 aa)). The segment at 352 to 704 (TVDSADHQRL…QWLSTLAEFG (353 aa)) is (alpha/beta)6 barrel subdomain. (1,3-beta-D-glucosyl)n contacts are provided by Tyr382, Lys386, Asp457, His461, Asn532, Glu534, and Glu538. The active site involves Asp457. Residues Glu534 and Glu538 contribute to the active site.

This sequence belongs to the glycosyl hydrolase 81 family. In terms of processing, predicted to be exported by the Tat system. The position of the signal peptide cleavage has not been experimentally proven.

Its subcellular location is the secreted. The enzyme catalyses Hydrolysis of (1-&gt;3)-beta-D-glucosidic linkages in (1-&gt;3)-beta-D-glucans.. Functionally, cleaves internal linkages in 1,3-beta-glucan. May contribute to biomass degradation by hydrolyzing the 1,3-beta-linked plant polymer callose that is present in decomposing plant tissue. The polypeptide is Glucan endo-1,3-beta-D-glucosidase (Thermobifida fusca (strain YX)).